A 277-amino-acid chain; its full sequence is Undecaprenyl-diphosphatase (277 aa).

Transmembrane regions (helical) follow at residues 47-67 (FNII…RGKI), 85-105 (ANLL…ADLI), 108-128 (WLFN…VMLW), 187-207 (FSFF…GYVY), 218-238 (VFAV…RALL), and 249-269 (FAWY…FHLI).

The protein belongs to the UppP family.

Its subcellular location is the cell inner membrane. It catalyses the reaction di-trans,octa-cis-undecaprenyl diphosphate + H2O = di-trans,octa-cis-undecaprenyl phosphate + phosphate + H(+). Functionally, catalyzes the dephosphorylation of undecaprenyl diphosphate (UPP). Confers resistance to bacitracin. This is Undecaprenyl-diphosphatase from Pseudomonas aeruginosa (strain ATCC 15692 / DSM 22644 / CIP 104116 / JCM 14847 / LMG 12228 / 1C / PRS 101 / PAO1).